The sequence spans 429 residues: 3-phosphoshikimate 1-carboxyvinyltransferase (429 aa).

3 residues coordinate 3-phosphoshikimate: Lys-23, Ser-24, and Arg-28. Lys-23 provides a ligand contact to phosphoenolpyruvate. Gly-95 and Arg-123 together coordinate phosphoenolpyruvate. Positions 168, 170, 316, and 343 each coordinate 3-phosphoshikimate. Residue Gln-170 participates in phosphoenolpyruvate binding. Asp-316 serves as the catalytic Proton acceptor. Arg-347 and Arg-389 together coordinate phosphoenolpyruvate.

The protein belongs to the EPSP synthase family. Monomer.

The protein resides in the cytoplasm. It catalyses the reaction 3-phosphoshikimate + phosphoenolpyruvate = 5-O-(1-carboxyvinyl)-3-phosphoshikimate + phosphate. The protein operates within metabolic intermediate biosynthesis; chorismate biosynthesis; chorismate from D-erythrose 4-phosphate and phosphoenolpyruvate: step 6/7. Its function is as follows. Catalyzes the transfer of the enolpyruvyl moiety of phosphoenolpyruvate (PEP) to the 5-hydroxyl of shikimate-3-phosphate (S3P) to produce enolpyruvyl shikimate-3-phosphate and inorganic phosphate. The polypeptide is 3-phosphoshikimate 1-carboxyvinyltransferase (Bacillus cereus (strain ATCC 10987 / NRS 248)).